A 173-amino-acid chain; its full sequence is Lens fiber membrane intrinsic protein (173 aa).

Residues 1–3 (MYS) are Cytoplasmic-facing. Residues 4-24 (FMGGGLFCAWVGTILLVVATA) form a helical membrane-spanning segment. The Extracellular segment spans residues 25–66 (TDHWMQYRLSGSFAHQGLWRYCLGNKCFLQTESIAYWNATRA). Trp-43 and Trp-61 each carry a C-linked (Man) tryptophan glycan. Asn-62 carries an N-linked (GlcNAc...) asparagine glycan. Residues 67–87 (FMILSALCATSGIIMGVLAFA) traverse the membrane as a helical segment. Residues 88-98 (QQSTFTRLSRP) lie on the Cytoplasmic side of the membrane. Residues 99–119 (FSAGIMFFASTLFVLLALAIY) form a helical membrane-spanning segment. At 120–140 (TGVTVSFLGRRFGDWRFSWSY) the chain is on the extracellular side. Residues 141–161 (ILGWVALLMTFFAGIFYMCAY) traverse the membrane as a helical segment. Topologically, residues 162–173 (RMHECRRLSTPR) are cytoplasmic. Ser-170 is modified (phosphoserine). Thr-171 carries the phosphothreonine modification.

Belongs to the PMP-22/EMP/MP20 family. Seems to be associated with itself or another lens membrane component via disulfide bonds. In terms of tissue distribution, eye lens specific.

It is found in the membrane. In terms of biological role, present in the thicker 16-17 nm junctions of mammalian lens fiber cells, where it may contribute to cell junctional organization. Acts as a receptor for calmodulin. May play an important role in both lens development and cataractogenesis. This Rattus norvegicus (Rat) protein is Lens fiber membrane intrinsic protein (Lim2).